We begin with the raw amino-acid sequence, 99 residues long: Malonate decarboxylase acyl carrier protein (99 aa).

Ser-25 carries the O-(phosphoribosyl dephospho-coenzyme A)serine modification.

It belongs to the MdcC family. Covalently binds the prosthetic group of malonate decarboxylase.

Its subcellular location is the cytoplasm. Functionally, subunit of malonate decarboxylase, it is an acyl carrier protein to which acetyl and malonyl thioester residues are bound via a 2'-(5''-phosphoribosyl)-3'-dephospho-CoA prosthetic group and turn over during the catalytic mechanism. This Pseudomonas putida (strain W619) protein is Malonate decarboxylase acyl carrier protein.